Reading from the N-terminus, the 574-residue chain is Urease subunit alpha (574 aa).

The 444-residue stretch at 131 to 574 (GAIDSHIHFI…LPMAQRYLLI (444 aa)) folds into the Urease domain. His136, His138, and Lys219 together coordinate Ni(2+). The residue at position 219 (Lys219) is an N6-carboxylysine. Residue His221 coordinates substrate. 2 residues coordinate Ni(2+): His248 and His274. The active-site Proton donor is His322. Ni(2+) is bound at residue Asp362.

It belongs to the metallo-dependent hydrolases superfamily. Urease alpha subunit family. Heterotrimer of UreA (gamma), UreB (beta) and UreC (alpha) subunits. Three heterotrimers associate to form the active enzyme. Ni cation is required as a cofactor. Post-translationally, carboxylation allows a single lysine to coordinate two nickel ions.

Its subcellular location is the cytoplasm. It carries out the reaction urea + 2 H2O + H(+) = hydrogencarbonate + 2 NH4(+). It participates in nitrogen metabolism; urea degradation; CO(2) and NH(3) from urea (urease route): step 1/1. The polypeptide is Urease subunit alpha (Prochlorococcus marinus (strain MIT 9303)).